A 505-amino-acid polypeptide reads, in one-letter code: Deoxyguanosinetriphosphate triphosphohydrolase (505 aa).

An HD domain is found at 66-273 (RLTHSLEVQQ…MEAADDISYC (208 aa)).

The protein belongs to the dGTPase family. Type 1 subfamily. As to quaternary structure, homotetramer. It depends on Mg(2+) as a cofactor.

It carries out the reaction dGTP + H2O = 2'-deoxyguanosine + triphosphate + H(+). In terms of biological role, dGTPase preferentially hydrolyzes dGTP over the other canonical NTPs. In Yersinia enterocolitica serotype O:8 / biotype 1B (strain NCTC 13174 / 8081), this protein is Deoxyguanosinetriphosphate triphosphohydrolase.